We begin with the raw amino-acid sequence, 231 residues long: Phosphatidylserine decarboxylase proenzyme (231 aa).

Residue Ser188 is the Schiff-base intermediate with substrate; via pyruvic acid of the active site. Ser188 carries the pyruvic acid (Ser); by autocatalysis modification.

The protein belongs to the phosphatidylserine decarboxylase family. PSD-A subfamily. As to quaternary structure, heterodimer of a large membrane-associated beta subunit and a small pyruvoyl-containing alpha subunit. Pyruvate serves as cofactor. Post-translationally, is synthesized initially as an inactive proenzyme. Formation of the active enzyme involves a self-maturation process in which the active site pyruvoyl group is generated from an internal serine residue via an autocatalytic post-translational modification. Two non-identical subunits are generated from the proenzyme in this reaction, and the pyruvate is formed at the N-terminus of the alpha chain, which is derived from the carboxyl end of the proenzyme. The post-translation cleavage follows an unusual pathway, termed non-hydrolytic serinolysis, in which the side chain hydroxyl group of the serine supplies its oxygen atom to form the C-terminus of the beta chain, while the remainder of the serine residue undergoes an oxidative deamination to produce ammonia and the pyruvoyl prosthetic group on the alpha chain.

It localises to the cell membrane. It carries out the reaction a 1,2-diacyl-sn-glycero-3-phospho-L-serine + H(+) = a 1,2-diacyl-sn-glycero-3-phosphoethanolamine + CO2. The protein operates within phospholipid metabolism; phosphatidylethanolamine biosynthesis; phosphatidylethanolamine from CDP-diacylglycerol: step 2/2. In terms of biological role, catalyzes the formation of phosphatidylethanolamine (PtdEtn) from phosphatidylserine (PtdSer). The protein is Phosphatidylserine decarboxylase proenzyme of Rickettsia rickettsii (strain Iowa).